We begin with the raw amino-acid sequence, 179 residues long: Large ribosomal subunit protein uL5 (179 aa).

Belongs to the universal ribosomal protein uL5 family. As to quaternary structure, part of the 50S ribosomal subunit; part of the 5S rRNA/L5/L18/L25 subcomplex. Contacts the 5S rRNA and the P site tRNA. Forms a bridge to the 30S subunit in the 70S ribosome.

In terms of biological role, this is one of the proteins that bind and probably mediate the attachment of the 5S RNA into the large ribosomal subunit, where it forms part of the central protuberance. In the 70S ribosome it contacts protein S13 of the 30S subunit (bridge B1b), connecting the 2 subunits; this bridge is implicated in subunit movement. Contacts the P site tRNA; the 5S rRNA and some of its associated proteins might help stabilize positioning of ribosome-bound tRNAs. The sequence is that of Large ribosomal subunit protein uL5 from Prochlorococcus marinus (strain SARG / CCMP1375 / SS120).